Reading from the N-terminus, the 284-residue chain is 4-diphosphocytidyl-2-C-methyl-D-erythritol kinase (284 aa).

The active site involves Lys-14. Position 97-107 (97-107 (PMGGGVGGGSS)) interacts with ATP. Residue Asp-139 is part of the active site.

Belongs to the GHMP kinase family. IspE subfamily.

It carries out the reaction 4-CDP-2-C-methyl-D-erythritol + ATP = 4-CDP-2-C-methyl-D-erythritol 2-phosphate + ADP + H(+). Its pathway is isoprenoid biosynthesis; isopentenyl diphosphate biosynthesis via DXP pathway; isopentenyl diphosphate from 1-deoxy-D-xylulose 5-phosphate: step 3/6. Its function is as follows. Catalyzes the phosphorylation of the position 2 hydroxy group of 4-diphosphocytidyl-2C-methyl-D-erythritol. This chain is 4-diphosphocytidyl-2-C-methyl-D-erythritol kinase, found in Pseudoalteromonas translucida (strain TAC 125).